The sequence spans 939 residues: Isoleucine--tRNA ligase (939 aa).

A 'HIGH' region motif is present at residues 58–68 (PYANGNIHIGH). Glutamate 562 contacts L-isoleucyl-5'-AMP. The short motif at 603–607 (KMSKS) is the 'KMSKS' region element. Position 606 (lysine 606) interacts with ATP. The Zn(2+) site is built by cysteine 903, cysteine 906, cysteine 922, and cysteine 925.

It belongs to the class-I aminoacyl-tRNA synthetase family. IleS type 1 subfamily. In terms of assembly, monomer. Zn(2+) is required as a cofactor.

The protein localises to the cytoplasm. It catalyses the reaction tRNA(Ile) + L-isoleucine + ATP = L-isoleucyl-tRNA(Ile) + AMP + diphosphate. Catalyzes the attachment of isoleucine to tRNA(Ile). As IleRS can inadvertently accommodate and process structurally similar amino acids such as valine, to avoid such errors it has two additional distinct tRNA(Ile)-dependent editing activities. One activity is designated as 'pretransfer' editing and involves the hydrolysis of activated Val-AMP. The other activity is designated 'posttransfer' editing and involves deacylation of mischarged Val-tRNA(Ile). The polypeptide is Isoleucine--tRNA ligase (Buchnera aphidicola subsp. Baizongia pistaciae (strain Bp)).